The chain runs to 545 residues: Glucose-6-phosphate isomerase (545 aa).

Glutamate 343 acts as the Proton donor in catalysis. Catalysis depends on residues histidine 374 and lysine 513.

This sequence belongs to the GPI family.

Its subcellular location is the cytoplasm. It carries out the reaction alpha-D-glucose 6-phosphate = beta-D-fructose 6-phosphate. The protein operates within carbohydrate biosynthesis; gluconeogenesis. It functions in the pathway carbohydrate degradation; glycolysis; D-glyceraldehyde 3-phosphate and glycerone phosphate from D-glucose: step 2/4. Its function is as follows. Catalyzes the reversible isomerization of glucose-6-phosphate to fructose-6-phosphate. The polypeptide is Glucose-6-phosphate isomerase (Methylibium petroleiphilum (strain ATCC BAA-1232 / LMG 22953 / PM1)).